We begin with the raw amino-acid sequence, 860 residues long: Leucine--tRNA ligase (860 aa).

The 'HIGH' region signature appears at 42-52; the sequence is PYPSGRLHMGH. The 'KMSKS' region signature appears at 619–623; the sequence is KMSKS. Residue Lys-622 coordinates ATP.

It belongs to the class-I aminoacyl-tRNA synthetase family.

The protein localises to the cytoplasm. It catalyses the reaction tRNA(Leu) + L-leucine + ATP = L-leucyl-tRNA(Leu) + AMP + diphosphate. This is Leucine--tRNA ligase from Salmonella paratyphi B (strain ATCC BAA-1250 / SPB7).